The sequence spans 482 residues: NADH-quinone oxidoreductase subunit D (482 aa).

Residues 1-16 (MTTNTSTSSTTDDLTT) show a composition bias toward low complexity. The interval 1–48 (MTTNTSTSSTTDDLTTGAPNGTGAPDGANGVGGPTGTVGGPGEHPAYE) is disordered. Residues 29 to 42 (NGVGGPTGTVGGPG) show a composition bias toward gly residues.

Belongs to the complex I 49 kDa subunit family. As to quaternary structure, NDH-1 is composed of 14 different subunits. Subunits NuoB, C, D, E, F, and G constitute the peripheral sector of the complex.

The protein resides in the cell membrane. It carries out the reaction a quinone + NADH + 5 H(+)(in) = a quinol + NAD(+) + 4 H(+)(out). Functionally, NDH-1 shuttles electrons from NADH, via FMN and iron-sulfur (Fe-S) centers, to quinones in the respiratory chain. The immediate electron acceptor for the enzyme in this species is believed to be a menaquinone. Couples the redox reaction to proton translocation (for every two electrons transferred, four hydrogen ions are translocated across the cytoplasmic membrane), and thus conserves the redox energy in a proton gradient. This chain is NADH-quinone oxidoreductase subunit D, found in Frankia casuarinae (strain DSM 45818 / CECT 9043 / HFP020203 / CcI3).